A 707-amino-acid chain; its full sequence is Polyribonucleotide nucleotidyltransferase (707 aa).

Residues Asp486 and Asp492 each contribute to the Mg(2+) site. One can recognise a KH domain in the interval 553–612 (PRIHKIKINPEKIKDVIGKGGSVIRMLTEETGTIIEIEDDGTIKISATIGEKAKNAIRRI). The 69-residue stretch at 622–690 (GRIYSGKVTR…RQGRLRLSIK (69 aa)) folds into the S1 motif domain.

This sequence belongs to the polyribonucleotide nucleotidyltransferase family. As to quaternary structure, component of the RNA degradosome, which is a multiprotein complex involved in RNA processing and mRNA degradation. The cofactor is Mg(2+).

The protein resides in the cytoplasm. It catalyses the reaction RNA(n+1) + phosphate = RNA(n) + a ribonucleoside 5'-diphosphate. In terms of biological role, involved in mRNA degradation. Catalyzes the phosphorolysis of single-stranded polyribonucleotides processively in the 3'- to 5'-direction. This is Polyribonucleotide nucleotidyltransferase from Buchnera aphidicola subsp. Schizaphis graminum (strain Sg).